Consider the following 391-residue polypeptide: Putative penicillin-binding protein PbpX (391 aa).

The helical transmembrane segment at 21 to 40 (GKLLFGLLAVMVCITIWNAL) threads the bilayer. The disordered stretch occupies residues 44–76 (SEENEPSQETAAVSNTDQKKEVKKKTAKKSEEQ). The span at 50–59 (SQETAAVSNT) shows a compositional bias: polar residues.

This sequence belongs to the beta-lactamase family.

It localises to the cell membrane. The sequence is that of Putative penicillin-binding protein PbpX (pbpX) from Bacillus subtilis (strain 168).